Here is a 40-residue protein sequence, read N- to C-terminus: Unknown protein from spot 207 of 2D-PAGE of etiolated coleoptile (40 aa).

This sequence belongs to the GST superfamily. HSP26 family.

This chain is Unknown protein from spot 207 of 2D-PAGE of etiolated coleoptile, found in Zea mays (Maize).